Reading from the N-terminus, the 489-residue chain is Protein TOS4 (489 aa).

Composition is skewed to polar residues over residues 1–10 (MSSQFPSSPY) and 20–32 (NYKQQPNCPSSNY). The interval 1-101 (MSSQFPSSPY…FSSKLSSPSR (101 aa)) is disordered. Position 40 is a phosphoserine (Ser-40). Residues 56–68 (PSSSIGRVSSPVR) are compositionally biased toward polar residues. A compositionally biased stretch (low complexity) spans 89–100 (SPKFSSKLSSPS). Phosphoserine is present on Ser-100. Positions 118–170 (ITVGRNSSQCDVALCKNKFISRVHASITYLPQTNEVKIHCFSMNGLIVTYRKQ) constitute an FHA domain. The tract at residues 316-366 (SSPLSSVSSVDHEEQTLRQDSLSSDKNPMTMKKPKLNKRVLPSKPKKSVKE) is disordered. Positions 333 to 342 (RQDSLSSDKN) are enriched in polar residues.

Belongs to the PLM2/TOS4 family. Post-translationally, phosphorylated by CDC28.

The protein localises to the nucleus. Binds to the promoters of genes with functions important for the G1/S (start) transition; primarily genes involved in pheromone response, polarized growth and transcription. This Saccharomyces cerevisiae (strain ATCC 204508 / S288c) (Baker's yeast) protein is Protein TOS4 (TOS4).